Reading from the N-terminus, the 141-residue chain is Acetyltransferase YE1169 (141 aa).

An N-acetyltransferase domain is found at Met-1–Tyr-141.

The protein belongs to the acetyltransferase family. YpeA subfamily.

The polypeptide is Acetyltransferase YE1169 (Yersinia enterocolitica serotype O:8 / biotype 1B (strain NCTC 13174 / 8081)).